The primary structure comprises 198 residues: Putative transposase InsO for insertion sequence element IS911B (198 aa).

One can recognise an Integrase catalytic domain in the interval 105–198 (AVTEPNQVWC…YCGDTGSGRV (94 aa)).

Involved in the transposition of the insertion sequence IS911B. This is Putative transposase InsO for insertion sequence element IS911B (insO2) from Escherichia coli (strain K12).